The primary structure comprises 403 residues: Spindle assembly abnormal protein 5 (403 aa).

Disordered regions lie at residues 24 to 79 and 96 to 127; these read PRVF…AHPA and TVEG…ENWR. Residues 116–127 show a composition bias toward basic and acidic residues; it reads RMTEENQEENWR. A coiled-coil region spans residues 128-163; the sequence is DVMKNEFEVMRKEMQEEATKKQEELNAQNLNKMQEM. Disordered regions lie at residues 174 to 205, 255 to 276, 302 to 325, and 355 to 403; these read AKPS…ANKI, AYSP…SSGN, RQWT…PDPQ, and YHVE…SRRK. Residues 177–194 are compositionally biased toward basic and acidic residues; sequence SAEESQDREKENWYEQSR. Positions 305–321 are enriched in basic and acidic residues; sequence TSERNDNRTHDNYRPYE. The segment covering 360–369 has biased composition (acidic residues); that stretch reads VPEYEEEETE. The span at 379 to 403 shows a compositional bias: basic and acidic residues; that stretch reads YHEPMETESAAERERRIREKYSRRK.

Interacts with sas-6 via its coiled coil domain.

The protein resides in the cytoplasm. The protein localises to the cytoskeleton. It is found in the microtubule organizing center. Its subcellular location is the centrosome. It localises to the centriole. Required for centrosome duplication. Essential for daughter-centriole formation. Requires both maternal and partenal expression, suggesting that it regulates centriole duplication during both spermatogenesis and early embryogenesis. The protein is Spindle assembly abnormal protein 5 (sas-5) of Caenorhabditis briggsae.